Here is a 79-residue protein sequence, read N- to C-terminus: Small ribosomal subunit protein uS17 (79 aa).

It belongs to the universal ribosomal protein uS17 family. As to quaternary structure, part of the 30S ribosomal subunit.

One of the primary rRNA binding proteins, it binds specifically to the 5'-end of 16S ribosomal RNA. The protein is Small ribosomal subunit protein uS17 of Rhizobium johnstonii (strain DSM 114642 / LMG 32736 / 3841) (Rhizobium leguminosarum bv. viciae).